The primary structure comprises 142 residues: Large ribosomal subunit protein uL13 (142 aa).

Belongs to the universal ribosomal protein uL13 family. In terms of assembly, part of the 50S ribosomal subunit.

In terms of biological role, this protein is one of the early assembly proteins of the 50S ribosomal subunit, although it is not seen to bind rRNA by itself. It is important during the early stages of 50S assembly. The protein is Large ribosomal subunit protein uL13 of Alkaliphilus metalliredigens (strain QYMF).